The primary structure comprises 439 residues: Maintenance of mitochondrial morphology protein 1 (439 aa).

Residues 1-76 (MSQDLIETTA…NGNTWSFTQG (76 aa)) lie on the Lumenal side of the membrane. Residues 77–97 (LVIGQVSVIFIIIVFVKFFVF) traverse the membrane as a helical segment. Residues 98-439 (ADSSSHIPTK…TPGEYVNSNI (342 aa)) lie on the Cytoplasmic side of the membrane. Disordered regions lie at residues 125 to 145 (KHSNGQFANDGENEDDTSLDS), 309 to 336 (MNGYSKENANGDGASSSNNDEDEDDGGT), and 405 to 425 (REPVTKKTTTTPSTTVNGTSA). Positions 165-395 (ASESLDWFNV…EPRFQVVRLP (231 aa)) constitute an SMP-LTD domain. Low complexity-rich tracts occupy residues 315–326 (ENANGDGASSSN) and 410–424 (KKTTTTPSTTVNGTS).

It belongs to the MMM1 family. Homodimer. Component of the ER-mitochondria encounter structure (ERMES) or MDM complex, composed of MMM1, MDM10, MDM12 and MDM34. An MMM1 homodimer associates with one molecule of MDM12 on each side in a pairwise head-to-tail manner, and the SMP-LTD domains of MMM1 and MDM12 generate a continuous hydrophobic tunnel for phospholipid trafficking.

It localises to the endoplasmic reticulum membrane. Functionally, component of the ERMES/MDM complex, which serves as a molecular tether to connect the endoplasmic reticulum (ER) and mitochondria. Components of this complex are involved in the control of mitochondrial shape and protein biogenesis, and function in nonvesicular lipid trafficking between the ER and mitochondria. The MDM12-MMM1 subcomplex functions in the major beta-barrel assembly pathway that is responsible for biogenesis of all outer membrane beta-barrel proteins, and acts in a late step after the SAM complex. The MDM10-MDM12-MMM1 subcomplex further acts in the TOM40-specific pathway after the action of the MDM12-MMM1 complex. Essential for establishing and maintaining the structure of mitochondria and maintenance of mtDNA nucleoids. This is Maintenance of mitochondrial morphology protein 1 from Candida albicans (strain SC5314 / ATCC MYA-2876) (Yeast).